A 76-amino-acid chain; its full sequence is Large ribosomal subunit protein uL24 (76 aa).

Belongs to the universal ribosomal protein uL24 family. Part of the 50S ribosomal subunit.

In terms of biological role, one of two assembly initiator proteins, it binds directly to the 5'-end of the 23S rRNA, where it nucleates assembly of the 50S subunit. Functionally, one of the proteins that surrounds the polypeptide exit tunnel on the outside of the subunit. This chain is Large ribosomal subunit protein uL24, found in Wolinella succinogenes (strain ATCC 29543 / DSM 1740 / CCUG 13145 / JCM 31913 / LMG 7466 / NCTC 11488 / FDC 602W) (Vibrio succinogenes).